Reading from the N-terminus, the 265-residue chain is Undecaprenyl-diphosphatase (265 aa).

The next 7 helical transmembrane spans lie at 42–62 (AATF…VLYW), 82–102 (GIML…AAHS), 108–128 (LFTP…MLLV), 143–163 (MSPA…WPGF), 181–201 (GLAA…ATGY), 221–241 (GFVV…ALVG), and 248–264 (FAWY…YFMA).

It belongs to the UppP family.

The protein localises to the cell inner membrane. The enzyme catalyses di-trans,octa-cis-undecaprenyl diphosphate + H2O = di-trans,octa-cis-undecaprenyl phosphate + phosphate + H(+). Catalyzes the dephosphorylation of undecaprenyl diphosphate (UPP). Confers resistance to bacitracin. This chain is Undecaprenyl-diphosphatase, found in Nitratidesulfovibrio vulgaris (strain DP4) (Desulfovibrio vulgaris).